The primary structure comprises 110 residues: Flagellar hook-basal body complex protein FliE (110 aa).

Belongs to the FliE family.

The protein localises to the bacterial flagellum basal body. This Pseudomonas putida (strain GB-1) protein is Flagellar hook-basal body complex protein FliE.